Here is a 311-residue protein sequence, read N- to C-terminus: Glycerol-3-phosphate dehydrogenase [NAD(P)+] (311 aa).

NADPH contacts are provided by Trp-11, Arg-30, Arg-31, and Lys-95. Lys-95, Gly-123, and Ser-125 together coordinate sn-glycerol 3-phosphate. Residue Ala-127 coordinates NADPH. Sn-glycerol 3-phosphate is bound by residues Lys-177, Asp-230, Ser-240, Arg-241, and Asn-242. The active-site Proton acceptor is Lys-177. Arg-241 provides a ligand contact to NADPH. NADPH is bound by residues Val-265 and Glu-267.

It belongs to the NAD-dependent glycerol-3-phosphate dehydrogenase family.

The protein resides in the cytoplasm. The catalysed reaction is sn-glycerol 3-phosphate + NAD(+) = dihydroxyacetone phosphate + NADH + H(+). It catalyses the reaction sn-glycerol 3-phosphate + NADP(+) = dihydroxyacetone phosphate + NADPH + H(+). The protein operates within membrane lipid metabolism; glycerophospholipid metabolism. Its function is as follows. Catalyzes the reduction of the glycolytic intermediate dihydroxyacetone phosphate (DHAP) to sn-glycerol 3-phosphate (G3P), the key precursor for phospholipid synthesis. The chain is Glycerol-3-phosphate dehydrogenase [NAD(P)+] from Bartonella bacilliformis (strain ATCC 35685 / KC583 / Herrer 020/F12,63).